Consider the following 256-residue polypeptide: Thiazole synthase (256 aa).

The Schiff-base intermediate with DXP role is filled by lysine 96. Residues glycine 157, 183–184, and 205–206 each bind 1-deoxy-D-xylulose 5-phosphate; these read AG and NT.

The protein belongs to the ThiG family. As to quaternary structure, homotetramer. Forms heterodimers with either ThiH or ThiS.

It localises to the cytoplasm. The enzyme catalyses [ThiS sulfur-carrier protein]-C-terminal-Gly-aminoethanethioate + 2-iminoacetate + 1-deoxy-D-xylulose 5-phosphate = [ThiS sulfur-carrier protein]-C-terminal Gly-Gly + 2-[(2R,5Z)-2-carboxy-4-methylthiazol-5(2H)-ylidene]ethyl phosphate + 2 H2O + H(+). It functions in the pathway cofactor biosynthesis; thiamine diphosphate biosynthesis. Catalyzes the rearrangement of 1-deoxy-D-xylulose 5-phosphate (DXP) to produce the thiazole phosphate moiety of thiamine. Sulfur is provided by the thiocarboxylate moiety of the carrier protein ThiS. In vitro, sulfur can be provided by H(2)S. The chain is Thiazole synthase from Bacillus cereus (strain G9842).